The following is a 123-amino-acid chain: Anti-lipopolysaccharide factor (123 aa).

Positions 1–26 (MRTRVMAGLCVALVVMCLYMPQPCEA) are cleaved as a signal peptide. Cys55 and Cys76 are disulfide-bonded.

As to expression, strong expression in hemocytes, heart and muscle, with weaker expression detected in gills and hepatopancreas. No expression detected in eyes.

It localises to the secreted. In terms of biological role, binds to bacterial LPS and may specifically inhibit the LPS-mediated activation of the hemolymph coagulation. It has a strong antibacterial effect especially on the growth of Gram-negative bacteria. The polypeptide is Anti-lipopolysaccharide factor (Scylla serrata (Mud crab)).